A 71-amino-acid polypeptide reads, in one-letter code: Small ribosomal subunit protein eS17 (71 aa).

This sequence belongs to the eukaryotic ribosomal protein eS17 family.

The chain is Small ribosomal subunit protein eS17 from Pyrobaculum arsenaticum (strain DSM 13514 / JCM 11321 / PZ6).